A 407-amino-acid polypeptide reads, in one-letter code: Aurofusarin biosynthesis cluster protein S (407 aa).

Residues 1 to 35 (MSKQKPSLWRALRALSFIISIPLLIQYLVLKWYST) form the signal peptide. N-linked (GlcNAc...) asparagine glycans are attached at residues Asn52, Asn174, Asn196, Asn274, and Asn312. 2 consecutive FAS1 domains span residues 52–192 (NLTV…DTVL) and 195–365 (PNST…DSIL).

Might be part of an extracellular enzyme complex composed of GIP1, aurF, aurO and aurS.

The protein localises to the secreted. It localises to the extracellular space. It functions in the pathway pigment biosynthesis. Part of the gene cluster that mediates the biosynthesis of aurofusarin, a red mycelium pigment which is acting as a mycotoxin. The first step is performed by the polyketide synthase which condenses one acetyl-CoA and 6 malonyl-CoA units to form the first intermediate, the cyclic heptaketide and yellow pigment YWA1. The C2 hydroxyl group in the pyrone ring of YWA1 is probably formed during ring closure by an aldol-type cyclization reaction. The dehydratase aurZ then acts as the first tailoring enzyme in the aurofusarin biosynthetic pathway by converting YWA1 to nor-rubrofusarin. Nor-rubrofusarin is then methylated to rubrofusarin by the O-methyltransferase aurJ. Rubrofusarin is then transported across the plasma membrane by the rubrofusarin-specific pump aurT for further enzymatic processing by the extracellular complex composed of GIP1, aurF, aurO and aurS to yield aurofusarin. This Gibberella zeae (strain ATCC MYA-4620 / CBS 123657 / FGSC 9075 / NRRL 31084 / PH-1) (Wheat head blight fungus) protein is Aurofusarin biosynthesis cluster protein S.